Here is a 193-residue protein sequence, read N- to C-terminus: Probable gluconokinase (193 aa).

18-25 contributes to the ATP binding site; sequence GTAGTGKS.

This sequence belongs to the gluconokinase GntK/GntV family.

Its subcellular location is the cytoplasm. It carries out the reaction D-gluconate + ATP = 6-phospho-D-gluconate + ADP + H(+). It participates in carbohydrate acid metabolism; D-gluconate degradation. The chain is Probable gluconokinase from Saccharomyces cerevisiae (strain ATCC 204508 / S288c) (Baker's yeast).